The following is a 729-amino-acid chain: Fatty acid oxidation complex subunit alpha (729 aa).

Residues 1–189 form an enoyl-CoA hydratase/isomerase region; that stretch reads MLYKGDTLYL…KIGLVDGVVK (189 aa). Residue Asp-296 coordinates substrate. Residues 311-729 are 3-hydroxyacyl-CoA dehydrogenase; that stretch reads ETPKQAAVLG…ARPVGDLKTA (419 aa). Residues Met-324, Asp-343, 400–402, Lys-407, and Ser-429 contribute to the NAD(+) site; that span reads VVE. His-450 serves as the catalytic For 3-hydroxyacyl-CoA dehydrogenase activity. Residue Asn-453 coordinates NAD(+). Residues Asn-500 and Tyr-660 each coordinate substrate. Residues 707-729 form a disordered region; it reads ARHNEPYYPPVEPARPVGDLKTA.

It in the N-terminal section; belongs to the enoyl-CoA hydratase/isomerase family. The protein in the C-terminal section; belongs to the 3-hydroxyacyl-CoA dehydrogenase family. In terms of assembly, heterotetramer of two alpha chains (FadB) and two beta chains (FadA).

It carries out the reaction a (3S)-3-hydroxyacyl-CoA + NAD(+) = a 3-oxoacyl-CoA + NADH + H(+). The catalysed reaction is a (3S)-3-hydroxyacyl-CoA = a (2E)-enoyl-CoA + H2O. It catalyses the reaction a 4-saturated-(3S)-3-hydroxyacyl-CoA = a (3E)-enoyl-CoA + H2O. The enzyme catalyses (3S)-3-hydroxybutanoyl-CoA = (3R)-3-hydroxybutanoyl-CoA. It carries out the reaction a (3Z)-enoyl-CoA = a 4-saturated (2E)-enoyl-CoA. The catalysed reaction is a (3E)-enoyl-CoA = a 4-saturated (2E)-enoyl-CoA. Its pathway is lipid metabolism; fatty acid beta-oxidation. In terms of biological role, involved in the aerobic and anaerobic degradation of long-chain fatty acids via beta-oxidation cycle. Catalyzes the formation of 3-oxoacyl-CoA from enoyl-CoA via L-3-hydroxyacyl-CoA. It can also use D-3-hydroxyacyl-CoA and cis-3-enoyl-CoA as substrate. The polypeptide is Fatty acid oxidation complex subunit alpha (Escherichia coli O6:K15:H31 (strain 536 / UPEC)).